A 454-amino-acid chain; its full sequence is Tubulin gamma chain (454 aa).

142 to 148 is a binding site for GTP; sequence AGGTGSG.

This sequence belongs to the tubulin family.

It is found in the cytoplasm. It localises to the cytoskeleton. Its subcellular location is the microtubule organizing center. The protein localises to the spindle pole body. In terms of biological role, tubulin is the major constituent of microtubules. The gamma chain is found at microtubule organizing centers (MTOC) such as the spindle pole or the centrosome, suggesting that it is involved in the minus-end nucleation of microtubule assembly. Interacts physically with beta-tubulin and is involved in microtubule function. This chain is Tubulin gamma chain (mipA), found in Emericella nidulans (strain FGSC A4 / ATCC 38163 / CBS 112.46 / NRRL 194 / M139) (Aspergillus nidulans).